The primary structure comprises 478 residues: Protein trichome birefringence-like 20 (478 aa).

Residues 10–30 traverse the membrane as a helical; Signal-anchor for type II membrane protein segment; sequence IGLVIFPLILLTIAPILYLFF. Residues 50-68 are compositionally biased toward low complexity; sequence SSAISSPSRYNHSSSSSDS. A disordered region spans residues 50-125; it reads SSAISSPSRY…KEHRRKKRKR (76 aa). The segment covering 92–110 has biased composition (polar residues); the sequence is SSSLHNNDRLSISSSNGHH. Basic residues predominate over residues 112-125; the sequence is VTPKKEHRRKKRKR. The GDS motif motif lies at 200 to 202; that stretch reads GDS. The short motif at 447-461 is the DCXHWCLPGXXDXWN motif element; it reads DCVHWCLPGPIDSWN.

This sequence belongs to the PC-esterase family. TBL subfamily.

The protein localises to the membrane. Its function is as follows. May act as a bridging protein that binds pectin and other cell wall polysaccharides. Probably involved in maintaining esterification of pectins. May be involved in the specific O-acetylation of cell wall polymers. The chain is Protein trichome birefringence-like 20 (TBL20) from Arabidopsis thaliana (Mouse-ear cress).